Consider the following 1116-residue polypeptide: Pleckstrin homology domain-containing family A member 5 (1116 aa).

A2 carries the post-translational modification N-acetylalanine. The 34-residue stretch at 10–43 (ISLPRSWTYGITRGGRVFFINEEAKSTTWLHPVT) folds into the WW 1 domain. S55 is modified (phosphoserine). A WW 2 domain is found at 56-89 (TDLPTGWEEAYTFEGARYYINHNERKVTCKHPVT). Residues 140 to 163 (SPVGRTSRASKKVHNFGKRSNSIK) form a disordered region. A compositionally biased stretch (basic residues) spans 147–156 (RASKKVHNFG). The PH domain maps to 169–268 (PVVRRGWLYK…WMKAMLDAAL (100 aa)). K301 participates in a covalent cross-link: Glycyl lysine isopeptide (Lys-Gly) (interchain with G-Cter in SUMO2). A phosphoserine mark is found at S382 and S410. 2 positions are modified to phosphothreonine: T438 and T460. Residues 459–495 (RTLPRNSKTRPESICSVTPSTHDKTLGPGAEEKRRSM) form a disordered region. The segment covering 479-495 (THDKTLGPGAEEKRRSM) has biased composition (basic and acidic residues). 6 positions are modified to phosphoserine: S568, S607, S809, S855, S933, and S937. 2 disordered regions span residues 928–978 (GASD…PATE) and 1025–1116 (RNKD…FMCV). A compositionally biased stretch (polar residues) spans 930–949 (SDQSPLQSPSNLRDNPFRTT). The span at 952–978 (RRRDDKELDTAIRENDVKPDHETPATE) shows a compositional bias: basic and acidic residues. Positions 1036 to 1046 (FSPQDETQTAN) are enriched in polar residues. Over residues 1047–1061 (HKPEEHPEENTKNSV) the composition is skewed to basic and acidic residues. The segment covering 1070–1085 (SYESTPEVSRGNQTMA) has biased composition (polar residues). The segment covering 1088-1101 (SLSPSPESSASPVP) has biased composition (low complexity).

As to expression, highly expressed in heart and kidney.

It localises to the cytoplasm. This is Pleckstrin homology domain-containing family A member 5 (PLEKHA5) from Homo sapiens (Human).